We begin with the raw amino-acid sequence, 366 residues long: Glutamate 5-kinase (366 aa).

Lys17 provides a ligand contact to ATP. Substrate is bound by residues Ser57, Asp144, and Asn156. Residues 176-177 (SD) and 216-222 (TGGMASK) contribute to the ATP site. The 75-residue stretch at 278-352 (QGILHIDEGA…GKSTQELPAE (75 aa)) folds into the PUA domain.

This sequence belongs to the glutamate 5-kinase family.

The protein resides in the cytoplasm. It carries out the reaction L-glutamate + ATP = L-glutamyl 5-phosphate + ADP. It participates in amino-acid biosynthesis; L-proline biosynthesis; L-glutamate 5-semialdehyde from L-glutamate: step 1/2. Functionally, catalyzes the transfer of a phosphate group to glutamate to form L-glutamate 5-phosphate. This is Glutamate 5-kinase from Rhodococcus opacus (strain B4).